A 465-amino-acid chain; its full sequence is RuvB-like helicase 2 (465 aa).

Gly-73 to Thr-80 contributes to the ATP binding site.

The protein belongs to the RuvB family. As to quaternary structure, forms homohexameric rings. May form a dodecamer with pont made of two stacked hexameric rings. Component of the chromatin remodeling Ino80 complex.

The protein localises to the nucleus. The catalysed reaction is ATP + H2O = ADP + phosphate + H(+). Functionally, acts as a transcriptional coactivator in Wg signaling. In terms of biological role, proposed core component of the chromatin remodeling Ino80 complex which is involved in transcriptional regulation, DNA replication and probably DNA repair. The chain is RuvB-like helicase 2 from Aedes aegypti (Yellowfever mosquito).